Reading from the N-terminus, the 209-residue chain is Thiamine-phosphate synthase (209 aa).

4-amino-2-methyl-5-(diphosphooxymethyl)pyrimidine contacts are provided by residues 41 to 45 (QYRNK) and Asn-73. Residues Asp-74 and Asp-93 each contribute to the Mg(2+) site. 4-amino-2-methyl-5-(diphosphooxymethyl)pyrimidine is bound at residue Ser-112. 139–141 (SST) is a 2-[(2R,5Z)-2-carboxy-4-methylthiazol-5(2H)-ylidene]ethyl phosphate binding site. A 4-amino-2-methyl-5-(diphosphooxymethyl)pyrimidine-binding site is contributed by Lys-142. Gly-168 provides a ligand contact to 2-[(2R,5Z)-2-carboxy-4-methylthiazol-5(2H)-ylidene]ethyl phosphate.

The protein belongs to the thiamine-phosphate synthase family. It depends on Mg(2+) as a cofactor.

The enzyme catalyses 2-[(2R,5Z)-2-carboxy-4-methylthiazol-5(2H)-ylidene]ethyl phosphate + 4-amino-2-methyl-5-(diphosphooxymethyl)pyrimidine + 2 H(+) = thiamine phosphate + CO2 + diphosphate. The catalysed reaction is 2-(2-carboxy-4-methylthiazol-5-yl)ethyl phosphate + 4-amino-2-methyl-5-(diphosphooxymethyl)pyrimidine + 2 H(+) = thiamine phosphate + CO2 + diphosphate. It catalyses the reaction 4-methyl-5-(2-phosphooxyethyl)-thiazole + 4-amino-2-methyl-5-(diphosphooxymethyl)pyrimidine + H(+) = thiamine phosphate + diphosphate. Its pathway is cofactor biosynthesis; thiamine diphosphate biosynthesis; thiamine phosphate from 4-amino-2-methyl-5-diphosphomethylpyrimidine and 4-methyl-5-(2-phosphoethyl)-thiazole: step 1/1. Its function is as follows. Condenses 4-methyl-5-(beta-hydroxyethyl)thiazole monophosphate (THZ-P) and 2-methyl-4-amino-5-hydroxymethyl pyrimidine pyrophosphate (HMP-PP) to form thiamine monophosphate (TMP). In Methylobacillus flagellatus (strain ATCC 51484 / DSM 6875 / VKM B-1610 / KT), this protein is Thiamine-phosphate synthase.